A 122-amino-acid polypeptide reads, in one-letter code: MIPGEIRPKKGVIEINVGRATKKVLVANTGDRPIQVGSHFHFIEVNRFLEFNREDAIGMHLNIPSGTAVRFEPGEEKEVELVEFGGKQHVFGLNKLTEGSTHHKDEILDKAIEGGFKGAEEK.

This sequence belongs to the urease beta subunit family. Heterotrimer of UreA (gamma), UreB (beta) and UreC (alpha) subunits. Three heterotrimers associate to form the active enzyme.

It is found in the cytoplasm. It catalyses the reaction urea + 2 H2O + H(+) = hydrogencarbonate + 2 NH4(+). Its pathway is nitrogen metabolism; urea degradation; CO(2) and NH(3) from urea (urease route): step 1/1. The chain is Urease subunit beta from Lysinibacillus sphaericus (strain C3-41).